The following is a 470-amino-acid chain: Argininosuccinate lyase (470 aa).

This sequence belongs to the lyase 1 family. Argininosuccinate lyase subfamily.

The protein resides in the cytoplasm. The catalysed reaction is 2-(N(omega)-L-arginino)succinate = fumarate + L-arginine. It functions in the pathway amino-acid biosynthesis; L-arginine biosynthesis; L-arginine from L-ornithine and carbamoyl phosphate: step 3/3. In Mycobacterium leprae (strain Br4923), this protein is Argininosuccinate lyase.